A 106-amino-acid polypeptide reads, in one-letter code: UPF0473 protein LSEI_0788 (106 aa).

Belongs to the UPF0473 family.

The protein is UPF0473 protein LSEI_0788 of Lacticaseibacillus paracasei (strain ATCC 334 / BCRC 17002 / CCUG 31169 / CIP 107868 / KCTC 3260 / NRRL B-441) (Lactobacillus paracasei).